Here is a 164-residue protein sequence, read N- to C-terminus: UPF0225 protein Shewana3_2159 (164 aa).

This sequence belongs to the UPF0225 family.

The sequence is that of UPF0225 protein Shewana3_2159 from Shewanella sp. (strain ANA-3).